The chain runs to 655 residues: Very long-chain specific acyl-CoA dehydrogenase, mitochondrial (655 aa).

Residues 1 to 40 (MQSARMTPSVGRQLLRLGARSSRSAALQGQPRPTSAQRLY) constitute a mitochondrion transit peptide. Residues 1-70 (MQSARMTPSV…TREKPARAES (70 aa)) form a disordered region. Residues 21 to 37 (SSRSAALQGQPRPTSAQ) are compositionally biased toward polar residues. Residues 41 to 482 (ASEATQAVLE…ALQGCMDKGK (442 aa)) form a catalytic region. Lys51 bears the N6-acetyllysine mark. Positions 60–70 (STREKPARAES) are enriched in basic and acidic residues. Lys71 and Lys127 each carry N6-acetyllysine; alternate. N6-succinyllysine; alternate is present on residues Lys71 and Lys127. Lys195 carries the post-translational modification N6-succinyllysine. 214–223 (FCLTEPSSGS) contributes to the FAD binding site. Cys237 is modified (S-nitrosocysteine). Lys239 is subject to N6-acetyllysine; alternate. Residue Lys239 is modified to N6-succinyllysine; alternate. 249-251 (WIS) provides a ligand contact to FAD. Lys268 carries the N6-succinyllysine modification. Lys276 and Lys278 each carry N6-acetyllysine; alternate. An N6-succinyllysine; alternate mark is found at Lys276 and Lys278. 2 positions are modified to N6-acetyllysine: Lys298 and Lys316. Lys331 carries the N6-acetyllysine; alternate modification. Lys331 is subject to N6-succinyllysine; alternate. Residue Lys372 is modified to N6-succinyllysine. 461–463 (FEG) contributes to the substrate binding site. The active-site Proton acceptor is the Glu462. 464 to 466 (TND) contacts FAD. Lys482 is subject to N6-acetyllysine; alternate. Lys482 bears the N6-succinyllysine; alternate mark. The membrane-anchoring stretch occupies residues 483–516 (ELTGLGNALKNPLGNVGLLIGEASKQLRRRTGIG). Phosphoserine is present on residues Ser517 and Ser522. An N6-acetyllysine modification is found at Lys550. Residue Lys556 is modified to N6-acetyllysine; alternate. The residue at position 556 (Lys556) is an N6-succinyllysine; alternate. Gln562 is a binding site for FAD. Lys639 is modified (N6-succinyllysine).

The protein belongs to the acyl-CoA dehydrogenase family. Homodimer. Homodimerizes after import into the mitochondrion. FAD serves as cofactor. S-nitrosylation at Cys-237 in liver improves catalytic efficiency. In terms of tissue distribution, widely expressed (at protein level).

It localises to the mitochondrion inner membrane. It catalyses the reaction a very-long-chain 2,3-saturated fatty acyl-CoA + oxidized [electron-transfer flavoprotein] + H(+) = a very-long-chain (2E)-enoyl-CoA + reduced [electron-transfer flavoprotein]. It carries out the reaction dodecanoyl-CoA + oxidized [electron-transfer flavoprotein] + H(+) = (2E)-dodecenoyl-CoA + reduced [electron-transfer flavoprotein]. The catalysed reaction is tetradecanoyl-CoA + oxidized [electron-transfer flavoprotein] + H(+) = (2E)-tetradecenoyl-CoA + reduced [electron-transfer flavoprotein]. The enzyme catalyses oxidized [electron-transfer flavoprotein] + hexadecanoyl-CoA + H(+) = (2E)-hexadecenoyl-CoA + reduced [electron-transfer flavoprotein]. It catalyses the reaction octadecanoyl-CoA + oxidized [electron-transfer flavoprotein] + H(+) = (2E)-octadecenoyl-CoA + reduced [electron-transfer flavoprotein]. It carries out the reaction eicosanoyl-CoA + oxidized [electron-transfer flavoprotein] + H(+) = (2E)-eicosenoyl-CoA + reduced [electron-transfer flavoprotein]. The catalysed reaction is docosanoyl-CoA + oxidized [electron-transfer flavoprotein] + H(+) = (2E)-docosenoyl-CoA + reduced [electron-transfer flavoprotein]. The enzyme catalyses tetracosanoyl-CoA + oxidized [electron-transfer flavoprotein] + H(+) = (2E)-tetracosenoyl-CoA + reduced [electron-transfer flavoprotein]. Its pathway is lipid metabolism; mitochondrial fatty acid beta-oxidation. Functionally, very long-chain specific acyl-CoA dehydrogenase is one of the acyl-CoA dehydrogenases that catalyze the first step of mitochondrial fatty acid beta-oxidation, an aerobic process breaking down fatty acids into acetyl-CoA and allowing the production of energy from fats. The first step of fatty acid beta-oxidation consists in the removal of one hydrogen from C-2 and C-3 of the straight-chain fatty acyl-CoA thioester, resulting in the formation of trans-2-enoyl-CoA. Among the different mitochondrial acyl-CoA dehydrogenases, very long-chain specific acyl-CoA dehydrogenase acts specifically on acyl-CoAs with saturated 12 to 24 carbons long primary chains. The protein is Very long-chain specific acyl-CoA dehydrogenase, mitochondrial of Rattus norvegicus (Rat).